A 66-amino-acid polypeptide reads, in one-letter code: Large ribosomal subunit protein uL29 (66 aa).

The protein belongs to the universal ribosomal protein uL29 family.

In Thermococcus gammatolerans (strain DSM 15229 / JCM 11827 / EJ3), this protein is Large ribosomal subunit protein uL29.